The primary structure comprises 168 residues: NAD(P)H-quinone oxidoreductase subunit J, chloroplastic (168 aa).

It belongs to the complex I 30 kDa subunit family. NDH is composed of at least 16 different subunits, 5 of which are encoded in the nucleus.

Its subcellular location is the plastid. The protein localises to the chloroplast thylakoid membrane. The catalysed reaction is a plastoquinone + NADH + (n+1) H(+)(in) = a plastoquinol + NAD(+) + n H(+)(out). The enzyme catalyses a plastoquinone + NADPH + (n+1) H(+)(in) = a plastoquinol + NADP(+) + n H(+)(out). In terms of biological role, NDH shuttles electrons from NAD(P)H:plastoquinone, via FMN and iron-sulfur (Fe-S) centers, to quinones in the photosynthetic chain and possibly in a chloroplast respiratory chain. The immediate electron acceptor for the enzyme in this species is believed to be plastoquinone. Couples the redox reaction to proton translocation, and thus conserves the redox energy in a proton gradient. This chain is NAD(P)H-quinone oxidoreductase subunit J, chloroplastic, found in Chaetosphaeridium globosum (Charophycean green alga).